Consider the following 902-residue polypeptide: 4-hydroxyphenylacetate decarboxylase glycyl radical subunit (902 aa).

One can recognise a PFL domain in the interval 38-774 (KRAEDLLDVY…ATLATPDGRL (737 aa)). Residues S348 and C507 each contribute to the 4-hydroxyphenylacetate site. C507 functions as the Cysteine radical intermediate in the catalytic mechanism. Residue E509 is the Proton donor of the active site. Positions 540 and 641 each coordinate 4-hydroxyphenylacetate. The region spanning 782 to 902 (GSVSAYAGTD…VIARTEYEGV (121 aa)) is the Glycine radical domain. G877 bears the Glycine radical mark.

It belongs to the glycyl radical enzyme (GRE) family. HPAD subfamily. In terms of assembly, heterooctamer consisting of 4 large (HpdB) subunits and 4 small (HpdC) subunits. Also forms a catalytically inactive homodimer. Phosphorylated on serine. Phosphorylation may trigger the formation of the active heterooctamers and thereby regulates enzyme activity. Post-translationally, requires the activating protein HpdA to generate the key active site glycyl radical that is involved in catalysis.

The enzyme catalyses 4-hydroxyphenylacetate + H(+) = 4-methylphenol + CO2. It catalyses the reaction 3,4-dihydroxyphenylacetate + H(+) = 4-methylcatechol + CO2. The catalysed reaction is 2-hydroxy-2-(4-hydroxyphenyl)acetate + H(+) = 4-hydroxybenzyl alcohol + CO2. Enzyme activity catalyzed by the HPA decarboxylase complex is rapidly and irreversibly inactivated by oxygen. Competitively inhibited by p-hydroxyphenylacetamide. Not inhibited by m- or o-hydroxyphenyl-acetate, p-hydroxybenzoate or p-hydroxyphenylpropionate. Functionally, glycyl radical subunit of the HPA decarboxylase that decarboxylates phenylacetates with a hydroxyl group in the p-position. Active toward 4-hydroxyphenylacetate, 3,4-dihydroxyphenylacetate and to a lesser extent p-hydroxymandelate (2-hydroxy-2-(4-hydroxyphenyl)acetate), forming 4-methylphenol, 4-methylcatechol and 4-hydroxybenzylalcohol, respectively. Is likely involved in the catabolism of aromatic amino acids such as tyrosine fermentation. 4-methylphenol (p-cresol) formation provides metabolic toxicity, which may benefit the pathogen C.difficile by suppression of the endogenous gastrointestinal microflora, allowing the development of gastrointestinal infections. The large subunit is the catalytic subunit that binds the substrate. This is 4-hydroxyphenylacetate decarboxylase glycyl radical subunit from Clostridioides difficile (Peptoclostridium difficile).